The chain runs to 274 residues: Large ribosomal subunit protein uL2cz/uL2cy (274 aa).

2 disordered regions span residues 1–22 and 225–274; these read MAIHLYKTSTPSTRNGAVDSQV and PVDH…RRSK.

This sequence belongs to the universal ribosomal protein uL2 family. As to quaternary structure, part of the 50S ribosomal subunit.

Its subcellular location is the plastid. It is found in the chloroplast. The polypeptide is Large ribosomal subunit protein uL2cz/uL2cy (rpl2-A) (Nasturtium officinale (Watercress)).